The chain runs to 253 residues: uncharacterized protein (253 aa).

Isoleucine 6–glycine 30 is a binding site for NADP(+). Position 140 (serine 140) interacts with substrate. Tyrosine 153 (proton acceptor) is an active-site residue.

It belongs to the short-chain dehydrogenases/reductases (SDR) family.

This is an uncharacterized protein from Escherichia coli (strain K12).